The following is a 622-amino-acid chain: Pyranose 2-oxidase (622 aa).

Positions 1–28 are cleaved as a signal peptide; the sequence is MSASSSDPFHSFAKTSFTSKAAKRATAH. A propeptide spanning residues 29-37 is cleaved from the precursor; it reads SLPPLPGPG. A Tele-8alpha-FAD histidine modification is found at H167. Positions 449 and 451 each coordinate substrate. H546 serves as the catalytic Proton acceptor. N591 is an active-site residue.

This sequence belongs to the GMC oxidoreductase family. Homotetramer. The cofactor is FAD. In terms of processing, not glycosylated.

Its subcellular location is the periplasm. It carries out the reaction D-glucose + O2 = 2-dehydro-D-glucose + H2O2. In terms of biological role, catalyzes the oxidation of various aldopyranoses and disaccharides on carbon-2 to the corresponding 2-keto sugars concomitant with the reduction of O(2) to H(2)O(2). Plays an important role in lignin degradation of wood rot fungi by supplying the essential cosubstrate H(2)O(2) for the ligninolytic peroxidases, lignin peroxidase and manganese-dependent peroxidase. The preferred substrate is D-glucose which is converted to 2-dehydro-D-glucose, an intermediate of a secondary metabolic pathway leading to the antibiotic cortalcerone. Also acts on D-xylose, together with D-glucose the major sugars derived from wood, on L-sorbose, D-galactose and 1,5-anhydroglucitol, a diagnostic marker of diabetes mellitus. The sequence is that of Pyranose 2-oxidase (p2ox) from Phlebiopsis gigantea (White-rot fungus).